The following is a 191-amino-acid chain: Threonylcarbamoyl-AMP synthase (191 aa).

The YrdC-like domain occupies 10–191 (PFRVRHAAAE…DGRSGAYLRR (182 aa)).

This sequence belongs to the SUA5 family. TsaC subfamily.

Its subcellular location is the cytoplasm. The catalysed reaction is L-threonine + hydrogencarbonate + ATP = L-threonylcarbamoyladenylate + diphosphate + H2O. Functionally, required for the formation of a threonylcarbamoyl group on adenosine at position 37 (t(6)A37) in tRNAs that read codons beginning with adenine. Catalyzes the conversion of L-threonine, HCO(3)(-)/CO(2) and ATP to give threonylcarbamoyl-AMP (TC-AMP) as the acyladenylate intermediate, with the release of diphosphate. The chain is Threonylcarbamoyl-AMP synthase from Halorhodospira halophila (strain DSM 244 / SL1) (Ectothiorhodospira halophila (strain DSM 244 / SL1)).